Reading from the N-terminus, the 365-residue chain is Flagellar P-ring protein (365 aa).

A signal peptide spans 1–19 (MIKFLSALILLLVTTAAQA).

The protein belongs to the FlgI family. The basal body constitutes a major portion of the flagellar organelle and consists of four rings (L,P,S, and M) mounted on a central rod.

The protein localises to the periplasm. The protein resides in the bacterial flagellum basal body. Functionally, assembles around the rod to form the L-ring and probably protects the motor/basal body from shearing forces during rotation. In Shigella boydii serotype 4 (strain Sb227), this protein is Flagellar P-ring protein.